An 89-amino-acid polypeptide reads, in one-letter code: MAHKKAGGSSRNGRDSESKRLGVKKFGGEAVLAGNIIIRQRGTKWHPGANVGMGKDHTLFALQAGAVSFAKKANGRTYVSVNPILEAAE.

Positions 1-21 (MAHKKAGGSSRNGRDSESKRL) are disordered.

Belongs to the bacterial ribosomal protein bL27 family.

This is Large ribosomal subunit protein bL27 from Chelativorans sp. (strain BNC1).